We begin with the raw amino-acid sequence, 554 residues long: Protein NODULATION SIGNALING PATHWAY 1 (554 aa).

The segment at 76 to 165 is disordered; it reads TTSTTSLEPN…NSNNGNNKDG (90 aa). Over residues 82–91 the composition is skewed to polar residues; the sequence is LEPNSFNNIP. Residues 95–107 show a composition bias toward basic and acidic residues; sequence LPKKRNAEDELSL. Over residues 150–162 the composition is skewed to low complexity; the sequence is AKANGSNSNNGNN. Positions 159–548 constitute a GRAS domain; sequence NGNNKDGRWA…QPVSFCSLWK (390 aa). Residues 166–227 are leucine repeat I (LRI); it reads RWAEQLLNPC…HHLSSSSSST (62 aa). A VHIID region spans residues 246 to 315; it reads LLKFYEFSPW…GGPPPLVRLT (70 aa). A VHIID motif is present at residues 281-285; sequence LHILD. The interval 331-373 is leucine repeat II (LRII); sequence TPFSIGPCGDTFSSGLLGYAQSLNVNLQIKKLDNHPLQTLNAK. The tract at residues 383–468 is PFYRE; the sequence is LIVCAQFRLH…RDSDERKMME (86 aa). Positions 471-548 are SAW; sequence AAKALTNQRE…QPVSFCSLWK (78 aa).

It belongs to the GRAS family. As to expression, expressed in epidermal and cortical root cells.

Its subcellular location is the nucleus. Transcriptional regulator essential for Nod-factor-induced gene expression. Acts downstream of calcium spiking. May be a target of DMI3, a calcium/calmodulin-dependent protein kinase (CCaMK). Is essential for Nod factor-elicited expression of ERN1. Transcription factor involved in the control of strigolactone biosynthesis in roots through the activation of the beta-carotene isomerase D27, which participates in a pathway leading to biosynthesis of strigolactones. This Medicago truncatula (Barrel medic) protein is Protein NODULATION SIGNALING PATHWAY 1.